Here is a 77-residue protein sequence, read N- to C-terminus: Translation initiation factor IF-1, chloroplastic (77 aa).

The 71-residue stretch at 1-71 (MKEQKWIHEG…TKGRIIYRIR (71 aa)) folds into the S1-like domain.

Belongs to the IF-1 family. In terms of assembly, component of the 30S ribosomal translation pre-initiation complex which assembles on the 30S ribosome in the order IF-2 and IF-3, IF-1 and N-formylmethionyl-tRNA(fMet); mRNA recruitment can occur at any time during PIC assembly.

The protein resides in the plastid. The protein localises to the chloroplast. Functionally, one of the essential components for the initiation of protein synthesis. Stabilizes the binding of IF-2 and IF-3 on the 30S subunit to which N-formylmethionyl-tRNA(fMet) subsequently binds. Helps modulate mRNA selection, yielding the 30S pre-initiation complex (PIC). Upon addition of the 50S ribosomal subunit IF-1, IF-2 and IF-3 are released leaving the mature 70S translation initiation complex. This is Translation initiation factor IF-1, chloroplastic from Vitis vinifera (Grape).